The chain runs to 646 residues: Lipoteichoic acid synthase (646 aa).

The Cytoplasmic portion of the chain corresponds to methionine 1–lysine 7. The chain crosses the membrane as a helical span at residues isoleucine 8–serine 28. At tyrosine 29–asparagine 43 the chain is on the extracellular side. The chain crosses the membrane as a helical span at residues leucine 44–phenylalanine 64. Residues lysine 65–lysine 68 are Cytoplasmic-facing. Residues alanine 69 to valine 89 form a helical membrane-spanning segment. Residues tyrosine 90–serine 119 lie on the Extracellular side of the membrane. Residues phenylalanine 120–phenylalanine 140 traverse the membrane as a helical segment. Residues lysine 141–lysine 153 lie on the Cytoplasmic side of the membrane. Residues phenylalanine 154–glutamate 174 traverse the membrane as a helical segment. Residues threonine 175–lysine 646 are Extracellular-facing. Residues glutamate 255 and threonine 300 each coordinate Mn(2+). Threonine 300 is a catalytic residue. Position 416 (histidine 416) interacts with substrate. Aspartate 475 and histidine 476 together coordinate Mn(2+). Residues asparagine 623–threonine 638 are compositionally biased toward basic and acidic residues. The interval asparagine 623–lysine 646 is disordered.

Belongs to the LTA synthase family. Proteolytically cleaved.

The protein resides in the cell membrane. Its subcellular location is the secreted. It participates in cell wall biogenesis; lipoteichoic acid biosynthesis. In terms of biological role, catalyzes the polymerization of lipoteichoic acid (LTA) polyglycerol phosphate, a reaction that presumably uses phosphatidylglycerol (PG) as substrate. Is required for staphylococcal growth and cell division process. The polypeptide is Lipoteichoic acid synthase (ltaS) (Staphylococcus aureus (strain USA300)).